A 990-amino-acid polypeptide reads, in one-letter code: Protein argonaute 7 (990 aa).

Positions Met-1–Asn-13 are enriched in basic residues. Residues Met-1–Leu-25 form a disordered region. The PAZ domain occupies Glu-379–Glu-484. The region spanning Leu-649 to Glu-950 is the Piwi domain. The tract at residues Ser-953–Thr-973 is disordered. A compositionally biased stretch (polar residues) spans Glu-954–Ser-966.

The protein belongs to the argonaute family. Ago subfamily. As to expression, expressed in leaves and floral buds, and at low levels in roots.

Involved in RNA-mediated post-transcriptional gene silencing (PTGS). Main component of the RNA-induced silencing complex (RISC) that binds to a short guide RNA such as a microRNA (miRNA) or small interfering RNA (siRNA). RISC uses the mature miRNA or siRNA as a guide for slicer-directed cleavage of homologous mRNAs to repress gene expression. Required for the processing of 21 nucleotide trans-acting siRNAs (ta-siRNAs) derived from TAS3a transcripts. Associates preferentially with the microRNA (miRNA) miR390 which guides the cleavage of TAS3 precursor RNA. Seems to act as miR390 specific slicer. Associates mainly with small RNAs of 21 nucleotide in length and with a 5' terminal adenosine. Acts in the RDR6/SGS3/DCL4/AGO7 trans-acting siRNA pathway involved in leaf developmental timing. Does not seem to act on leaf polarity. Required for the production of the 30-40nt bacterial-induced long siRNAs (lsiRNA). Involved in antiviral RNA silencing by contributing to efficient viral RNAs clearance. Targets less structured viral RNAs than AGO1 which is capable of targeting RNAs with more compact structures. This is Protein argonaute 7 (AGO7) from Arabidopsis thaliana (Mouse-ear cress).